A 203-amino-acid polypeptide reads, in one-letter code: Pyrrolidone-carboxylate peptidase (203 aa).

Catalysis depends on residues Glu78, Cys141, and His165.

The protein belongs to the peptidase C15 family. As to quaternary structure, homotetramer.

It localises to the cytoplasm. It carries out the reaction Release of an N-terminal pyroglutamyl group from a polypeptide, the second amino acid generally not being Pro.. Functionally, removes 5-oxoproline from various penultimate amino acid residues except L-proline. In Thermoanaerobacter pseudethanolicus (strain ATCC 33223 / 39E) (Clostridium thermohydrosulfuricum), this protein is Pyrrolidone-carboxylate peptidase.